A 1505-amino-acid polypeptide reads, in one-letter code: Synaptonemal complex protein 2 (1505 aa).

The disordered stretch occupies residues 439 to 483; sequence EKSNLQKKLTNPLEPDNSSSQRDRKNSQDEITTPSRKKMSEASMI. Phosphoserine is present on residues Ser457 and Ser465. Residue Thr471 is modified to Phosphothreonine. Ser494 bears the Phosphoserine mark. Thr503 bears the Phosphothreonine mark. Ser507, Ser516, Ser525, and Ser534 each carry phosphoserine. The disordered stretch occupies residues 536–571; sequence KSRQSDGRNRGNNRANHNKTATVQNKGHEHHESPDQ. Phosphothreonine occurs at positions 613 and 638. Residues Ser651, Ser655, and Ser746 each carry the phosphoserine modification. A disordered region spans residues 745–764; the sequence is KSPSRKSMRSHTKSRKELMS. Over residues 748 to 758 the composition is skewed to basic residues; it reads SRKSMRSHTKS. A Phosphoserine modification is found at Ser920. Thr922 carries the post-translational modification Phosphothreonine. Disordered stretches follow at residues 949–974 and 1035–1080; these read YSRN…QPRS and KEET…NGRE. A compositionally biased stretch (basic residues) spans 953-962; the sequence is KNTKKCKSIK. Phosphoserine is present on residues Ser1121, Ser1123, Ser1130, Ser1146, Ser1150, Ser1162, Ser1165, and Ser1170. Thr1174 is subject to Phosphothreonine. Ser1188 carries the post-translational modification Phosphoserine. The segment at 1199 to 1239 is disordered; sequence NSYSDVSSNSSEKLYMEPESPDSCENHVQSKREENHAASPF. A compositionally biased stretch (low complexity) spans 1200–1209; the sequence is SYSDVSSNSS. 2 positions are modified to phosphoserine: Ser1218 and Ser1221. Residues 1222-1234 are compositionally biased toward basic and acidic residues; that stretch reads CENHVQSKREENH. 3 positions are modified to phosphoserine: Ser1237, Ser1280, and Ser1283. Thr1318 carries the post-translational modification Phosphothreonine. The stretch at 1384–1435 forms a coiled coil; it reads ENIDKFQVTLLDELEKVEKDSQTLRDLEKEFVDIEEKIVHKMRAFHQSERER.

It belongs to the SYCP2 family. In terms of assembly, component of the lateral elements of synaptonemal complexes. Interacts with TEX11. Heterodimer with SYCP3. Interacts with SYCP3, SMC1A and SMC3. Phosphorylated. In terms of tissue distribution, detected in spermatocytes and testis (at protein level). Spermatocytes and oocytes. Meiotic prophase cells.

It localises to the nucleus. The protein localises to the chromosome. Its function is as follows. Major component of the axial/lateral elements of synaptonemal complexes (SCS) during meiotic prophase. Plays a role in the assembly of synaptonemal complexes. Required for normal meiotic chromosome synapsis during oocyte and spermatocyte development and for normal male and female fertility. Required for insertion of SYCP3 into synaptonemal complexes. May be involved in the organization of chromatin by temporarily binding to DNA scaffold attachment regions. Requires SYCP3, but not SYCP1, in order to be incorporated into the axial/lateral elements. This chain is Synaptonemal complex protein 2 (Sycp2), found in Rattus norvegicus (Rat).